A 520-amino-acid chain; its full sequence is Laccase-2 (520 aa).

Positions 1–19 are cleaved as a signal peptide; the sequence is MRFSNAFVLVAACISSVLA. 3 Plastocyanin-like domains span residues 21 to 145, 157 to 305, and 375 to 488; these read TKTF…FVVY, VDDE…LTLA, and TVPV…FAEA. 2 residues coordinate Cu cation: H82 and H84. Disulfide bonds link C103-C509 and C135-C229. N-linked (GlcNAc...) asparagine glycosylation is present at N108. Residues H127 and H129 each contribute to the Cu cation site. Residues N241 and N299 are each glycosylated (N-linked (GlcNAc...) asparagine). Residues H417, H420, H422, H470, C471, H472, and H476 each contribute to the Cu cation site. A glycan (N-linked (GlcNAc...) asparagine) is linked at N492.

It belongs to the multicopper oxidase family. Requires Cu cation as cofactor.

The protein localises to the secreted. The catalysed reaction is 4 hydroquinone + O2 = 4 benzosemiquinone + 2 H2O. Its function is as follows. Lignin degradation and detoxification of lignin-derived products. The chain is Laccase-2 (lcc2) from Agaricus bisporus (White button mushroom).